A 944-amino-acid chain; its full sequence is Neutral alpha-glucosidase AB (944 aa).

The first 28 residues, 1-28 (MAAVAAVAARRRRSWASLVLAFLGVCLG), serve as a signal peptide directing secretion. A disulfide bond links C41 and C47. S52 bears the Phosphoserine mark. The N-linked (GlcNAc...) asparagine glycan is linked to N97. The disordered stretch occupies residues 181–238 (QRAPRVSQGSKDPAEGDGAQPEETPRDGDKPEETQGKAEKDEPGAWEETFKTHSDSKP). A compositionally biased stretch (basic and acidic residues) spans 203 to 236 (ETPRDGDKPEETQGKAEKDEPGAWEETFKTHSDS). Substrate is bound by residues D283 and D429. D542 (nucleophile) is an active-site residue. Residue R602 coordinates substrate. The Proton donor role is filled by D618. C633 and C644 are oxidised to a cystine. H676 lines the substrate pocket.

Belongs to the glycosyl hydrolase 31 family. Heterodimer of a catalytic alpha subunit (GANAB) and a beta subunit (PRKCSH). Binds glycosylated PTPRC. As to expression, detected in placenta. Isoform 1 and isoform 2 are expressed in the kidney and liver.

Its subcellular location is the endoplasmic reticulum. It is found in the golgi apparatus. The protein resides in the melanosome. The enzyme catalyses N(4)-(alpha-D-Glc-(1-&gt;3)-alpha-D-Man-(1-&gt;2)-alpha-D-Man-(1-&gt;2)-alpha-D-Man-(1-&gt;3)-[alpha-D-Man-(1-&gt;2)-alpha-D-Man-(1-&gt;3)-[alpha-D-Man-(1-&gt;2)-alpha-D-Man-(1-&gt;6)]-alpha-D-Man-(1-&gt;6)]-beta-D-Man-(1-&gt;4)-beta-D-GlcNAc-(1-&gt;4)-beta-D-GlcNAc)-L-asparaginyl-[protein] + H2O = N(4)-(alpha-D-Man-(1-&gt;2)-alpha-D-Man-(1-&gt;2)-alpha-D-Man-(1-&gt;3)-[alpha-D-Man-(1-&gt;2)-alpha-D-Man-(1-&gt;3)-[alpha-D-Man-(1-&gt;2)-alpha-D-Man-(1-&gt;6)]-alpha-D-Man-(1-&gt;6)]-beta-D-Man-(1-&gt;4)-beta-D-GlcNAc-(1-&gt;4)-beta-D-GlcNAc)-L-asparaginyl-[protein] (N-glucan mannose isomer 9A1,2,3B1,2,3) + beta-D-glucose. The catalysed reaction is N(4)-(alpha-D-Glc-(1-&gt;3)-alpha-D-Glc-(1-&gt;3)-alpha-D-Man-(1-&gt;2)-alpha-D-Man-(1-&gt;2)-alpha-D-Man-(1-&gt;3)-[alpha-D-Man-(1-&gt;2)-alpha-D-Man-(1-&gt;3)-[alpha-D-Man-(1-&gt;2)-alpha-D-Man-(1-&gt;6)]-alpha-D-Man-(1-&gt;6)]-beta-D-Man-(1-&gt;4)-beta-D-GlcNAc-(1-&gt;4)-beta-D-GlcNAc)-L-asparaginyl-[protein] + H2O = N(4)-(alpha-D-Glc-(1-&gt;3)-alpha-D-Man-(1-&gt;2)-alpha-D-Man-(1-&gt;2)-alpha-D-Man-(1-&gt;3)-[alpha-D-Man-(1-&gt;2)-alpha-D-Man-(1-&gt;3)-[alpha-D-Man-(1-&gt;2)-alpha-D-Man-(1-&gt;6)]-alpha-D-Man-(1-&gt;6)]-beta-D-Man-(1-&gt;4)-beta-D-GlcNAc-(1-&gt;4)-beta-D-GlcNAc)-L-asparaginyl-[protein] + beta-D-glucose. It participates in glycan metabolism; N-glycan metabolism. With respect to regulation, inhibited by deoxynojirimycin. Its function is as follows. Catalytic subunit of glucosidase II that cleaves sequentially the 2 innermost alpha-1,3-linked glucose residues from the Glc(2)Man(9)GlcNAc(2) oligosaccharide precursor of immature glycoproteins. Required for PKD1/Polycystin-1 and PKD2/Polycystin-2 maturation and localization to the cell surface and cilia. In Homo sapiens (Human), this protein is Neutral alpha-glucosidase AB.